A 283-amino-acid polypeptide reads, in one-letter code: Short-chain dehydrogenase cctT (283 aa).

The first 20 residues, 1 to 20 (MLKTVLITGCSHGGLGAAMA), serve as a signal peptide directing secretion. Positions 7, 33, 39, 55, and 83 each coordinate NADP(+). N131 carries an N-linked (GlcNAc...) asparagine glycan. Residue S133 is the Proton donor of the active site. Y147, R151, V180, and T182 together coordinate NADP(+). Y147 (proton acceptor) is an active-site residue.

The protein belongs to the short-chain dehydrogenases/reductases (SDR) family.

Short-chain dehydrogenase; part of the gene cluster that mediates the biosynthesis of the mycotoxin cyclochlorotine, a hepatotoxic and carcinogenic cyclic chlorinated pentapeptide. The function of cctT within the pathway, if any, remains undetermined. The NRPS cctN initially catalyzes the condensation of L-serine (Ser), Pro, L-2-aminobutyrate (2Abu), Ser, and beta-Phe in this order to produce isocyclotine. After the dichlorination of Pro2 catalyzed by cctP2 to produce isocyclochlorotine, the cctO-mediated transacylation of isocyclochlorotine can furnish cyclochlorotine. The subsequent hydroxylation of cyclochlorotine by cctR yields hydroxycyclochlorotine as the final product. CctP1 probably acts as a phenylalanine aminomutase and provides the uncommon building block beta-Phe. Furthermore, 2Abu can be synthesized from threonine by one of the threonine dehydratases and transaminases localized outside of the cluster. The functions of the remaining proteins encoded by the cluster, cctM and cctT, have not been identified yet. The protein is Short-chain dehydrogenase cctT of Talaromyces islandicus (Penicillium islandicum).